The sequence spans 141 residues: Acetyltransferase YpeA (141 aa).

Positions 1–141 (MEIRVFRQED…GKRLIEDEEY (141 aa)) constitute an N-acetyltransferase domain.

The protein belongs to the acetyltransferase family. YpeA subfamily.

The polypeptide is Acetyltransferase YpeA (Salmonella choleraesuis (strain SC-B67)).